We begin with the raw amino-acid sequence, 64 residues long: Ferredoxin-like protein in nif region (64 aa).

A 4Fe-4S ferredoxin-type domain is found at 2–30; the sequence is AFKIIASQCTQCGACEFECPSNAIELKGE. [4Fe-4S] cluster is bound by residues Cys10, Cys13, Cys16, Cys20, Cys39, Cys42, Cys51, and Cys55.

It depends on [4Fe-4S] cluster as a cofactor.

The polypeptide is Ferredoxin-like protein in nif region (fdxN) (Sinorhizobium fredii (strain NBRC 101917 / NGR234)).